The following is an 822-amino-acid chain: MELLSGPHAFLLLLLQVCWLRSVVSEPYRAGFIGEAGVTLEVEGTDLEPSQVLGKVALAGQGMHHADNGDIIMLTRGTVQGGKDAMHSPPTRILRRRKREWVMPPIFVPENGKGPFPQRLNQLKSNKDRGTKIFYSITGPGADSPPEGVFTIEKESGWLLLHMPLDREKIVKYELYGHAVSENGASVEEPMNISIIVTDQNDNKPKFTQDTFRGSVLEGVMPGTSVMQVTATDEDDAVNTYNGVVAYSIHSQEPKEPHDLMFTIHKSTGTISVISSGLDREKVPEYRLTVQATDMDGEGSTTTAEAVVQILDANDNAPEFEPQKYEAWVPENEVGHEVQRLTVTDLDVPNSPAWRATYHIVGGDDGDHFTITTHPETNQGVLTTKKGLDFEAQDQHTLYVEVTNEAPFAVKLPTATATVVVHVKDVNEAPVFVPPSKVIEAQEGISIGELVCIYTAQDPDKEDQKISYTISRDPANWLAVDPDSGQITAAGILDREDEQFVKNNVYEVMVLATDSGNPPTTGTGTLLLTLTDINDHGPIPEPRQIIICNQSPVPQVLNITDKDLSPNSSPFQAQLTHDSDIYWMAEVSEKGDTVALSLKKFLKQDTYDLHLSLSDHGNREQLTMIRATVCDCHGQVFNDCPRPWKGGFILPILGAVLALLTLLLALLLLVRKKRKVKEPLLLPEDDTRDNVFYYGEEGGGEEDQDYDITQLHRGLEARPEVVLRNDVVPTFIPTPMYRPRPANPDEIGNFIIENLKAANTDPTAPPYDSLLVFDYEGSGSDAASLSSLTTSASDQDQDYNYLNEWGSRFKKLADMYGGGEDD.

A signal peptide spans 1-25 (MELLSGPHAFLLLLLQVCWLRSVVS). A propeptide spanning residues 26 to 99 (EPYRAGFIGE…PTRILRRRKR (74 aa)) is cleaved from the precursor. Cadherin domains lie at 100–207 (EWVM…KPKF), 208–320 (TQDT…APEF), 321–432 (EPQK…APVF), 433–538 (VPPS…DHGP), and 539–645 (IPEP…RPWK). At 100-647 (EWVMPPIFVP…NDCPRPWKGG (548 aa)) the chain is on the extracellular side. A glycan (N-linked (GlcNAc...) asparagine) is linked at asparagine 192. N-linked (GlcNAc...) asparagine glycosylation occurs at asparagine 558. A helical membrane pass occupies residues 648 to 670 (FILPILGAVLALLTLLLALLLLV). At 671 to 822 (RKKRKVKEPL…ADMYGGGEDD (152 aa)) the chain is on the cytoplasmic side.

Interacts with CDCP1 and CTNNB1.

It is found in the cell membrane. Its function is as follows. Cadherins are calcium-dependent cell adhesion proteins. They preferentially interact with themselves in a homophilic manner in connecting cells; cadherins may thus contribute to the sorting of heterogeneous cell types. This Mus musculus (Mouse) protein is Cadherin-3 (Cdh3).